The following is a 490-amino-acid chain: Betaine aldehyde dehydrogenase (490 aa).

K(+) contacts are provided by threonine 26, isoleucine 27, and aspartate 93. 150 to 152 serves as a coordination point for NAD(+); it reads GAW. Residue lysine 162 is the Charge relay system of the active site. NAD(+) is bound at residue 176–179; it reads KPSE. Position 180 (valine 180) interacts with K(+). 230–233 lines the NAD(+) pocket; the sequence is GVAS. A K(+)-binding site is contributed by leucine 246. The Proton acceptor role is filled by glutamate 252. NAD(+) contacts are provided by glycine 254, cysteine 286, and glutamate 387. Cysteine 286 serves as the catalytic Nucleophile. Cysteine 286 carries the post-translational modification Cysteine sulfenic acid (-SOH). Positions 457 and 460 each coordinate K(+). Glutamate 464 (charge relay system) is an active-site residue.

Belongs to the aldehyde dehydrogenase family. In terms of assembly, dimer of dimers. K(+) serves as cofactor.

The catalysed reaction is betaine aldehyde + NAD(+) + H2O = glycine betaine + NADH + 2 H(+). The protein operates within amine and polyamine biosynthesis; betaine biosynthesis via choline pathway; betaine from betaine aldehyde: step 1/1. Functionally, involved in the biosynthesis of the osmoprotectant glycine betaine. Catalyzes the irreversible oxidation of betaine aldehyde to the corresponding acid. This chain is Betaine aldehyde dehydrogenase, found in Escherichia coli (strain SMS-3-5 / SECEC).